Here is a 691-residue protein sequence, read N- to C-terminus: MPRTHAIEDYRNFGIMAHIDAGKTTTTERILYYTGKSHKIGEVHEGAATMDWMEQEQERGITITSAATTCFWRDKRLNIIDTPGHVDFTIEVERSLRVLDGAVCVLDGNQGVEPQTETVWRQADKYDVPRVVFVNKMDKIGADFFKCVADIIGRVAGKPVCLQLPIGAESSFKGVIDLIKMKAIVWSGEALGANFAEEEIPAELKDQAVEYRTKLVEACVELDDDAMTAYLDGVEPDEDGLRRLVRRAVQLRAFHPVLCGSAFKNKGVQPLLDAVVDYLPSPVDRGAVDGLDFKTEEPVKREPTDEDPFSMLAFKIMDDPHVGTITFCRVYSGKVESGTSVLNSSRDKKERVGRMLLMHANNREDIKEAYAGDIVALAGLKDTRTGDTLCDANKAVILEKMEFPEPVIEIAVEPKSKADQEKLGIALSKLAAEDPSFRVSTDQESGQTILKGMGELHLDIKVDILRRTYKVDANIGQPQVAYREKLTRRQEIDYTHKKQTGGTGQFARVKFVVEPNEPGAGFSFESKIVGGAVPKEYIPGVEKGLNSVLGAGVLAGFPVVDVKVELVDGAYHDVDSSALAFEIASRAAFREALQKGGSVLLEPVMKVEVVSPEEYTGSVIGDLNSRRGQIQGQDMRGNANVINAMVPLANMFGYVNQLRSFSQGRANFTMQFDHYEEVPRGEADKVIAKYA.

Residues 8–283 (EDYRNFGIMA…AVVDYLPSPV (276 aa)) form the tr-type G domain. Residues 17–24 (AHIDAGKT), 81–85 (DTPGH), and 135–138 (NKMD) contribute to the GTP site.

This sequence belongs to the TRAFAC class translation factor GTPase superfamily. Classic translation factor GTPase family. EF-G/EF-2 subfamily.

Its subcellular location is the cytoplasm. Catalyzes the GTP-dependent ribosomal translocation step during translation elongation. During this step, the ribosome changes from the pre-translocational (PRE) to the post-translocational (POST) state as the newly formed A-site-bound peptidyl-tRNA and P-site-bound deacylated tRNA move to the P and E sites, respectively. Catalyzes the coordinated movement of the two tRNA molecules, the mRNA and conformational changes in the ribosome. The chain is Elongation factor G from Methylorubrum populi (strain ATCC BAA-705 / NCIMB 13946 / BJ001) (Methylobacterium populi).